The following is a 227-amino-acid chain: Cytochrome c oxidase subunit 2 (227 aa).

At 1-14 the chain is on the mitochondrial intermembrane side; it reads MAYPFQLGLQDATS. Residues 15–45 traverse the membrane as a helical segment; sequence PIMEELLHFHDHTLMIVFLISSLVLYIISLM. Over 46-59 the chain is Mitochondrial matrix; sequence LTTKLTHTSTMDAQ. Residues 60 to 87 form a helical membrane-spanning segment; the sequence is EVETVWTILPAIILISIALPSLRILYMM. Over 88–227 the chain is Mitochondrial intermembrane; it reads DEINNPSLTV…YFEAWSTLMM (140 aa). Cu cation-binding residues include His-161, Cys-196, Glu-198, Cys-200, His-204, and Met-207. Residue Glu-198 participates in Mg(2+) binding. Residue Tyr-218 is modified to Phosphotyrosine.

The protein belongs to the cytochrome c oxidase subunit 2 family. In terms of assembly, component of the cytochrome c oxidase (complex IV, CIV), a multisubunit enzyme composed of 14 subunits. The complex is composed of a catalytic core of 3 subunits MT-CO1, MT-CO2 and MT-CO3, encoded in the mitochondrial DNA, and 11 supernumerary subunits COX4I, COX5A, COX5B, COX6A, COX6B, COX6C, COX7A, COX7B, COX7C, COX8 and NDUFA4, which are encoded in the nuclear genome. The complex exists as a monomer or a dimer and forms supercomplexes (SCs) in the inner mitochondrial membrane with NADH-ubiquinone oxidoreductase (complex I, CI) and ubiquinol-cytochrome c oxidoreductase (cytochrome b-c1 complex, complex III, CIII), resulting in different assemblies (supercomplex SCI(1)III(2)IV(1) and megacomplex MCI(2)III(2)IV(2)). Found in a complex with TMEM177, COA6, COX18, COX20, SCO1 and SCO2. Interacts with TMEM177 in a COX20-dependent manner. Interacts with COX20. Interacts with COX16. It depends on Cu cation as a cofactor.

It is found in the mitochondrion inner membrane. The catalysed reaction is 4 Fe(II)-[cytochrome c] + O2 + 8 H(+)(in) = 4 Fe(III)-[cytochrome c] + 2 H2O + 4 H(+)(out). Its function is as follows. Component of the cytochrome c oxidase, the last enzyme in the mitochondrial electron transport chain which drives oxidative phosphorylation. The respiratory chain contains 3 multisubunit complexes succinate dehydrogenase (complex II, CII), ubiquinol-cytochrome c oxidoreductase (cytochrome b-c1 complex, complex III, CIII) and cytochrome c oxidase (complex IV, CIV), that cooperate to transfer electrons derived from NADH and succinate to molecular oxygen, creating an electrochemical gradient over the inner membrane that drives transmembrane transport and the ATP synthase. Cytochrome c oxidase is the component of the respiratory chain that catalyzes the reduction of oxygen to water. Electrons originating from reduced cytochrome c in the intermembrane space (IMS) are transferred via the dinuclear copper A center (CU(A)) of subunit 2 and heme A of subunit 1 to the active site in subunit 1, a binuclear center (BNC) formed by heme A3 and copper B (CU(B)). The BNC reduces molecular oxygen to 2 water molecules using 4 electrons from cytochrome c in the IMS and 4 protons from the mitochondrial matrix. This is Cytochrome c oxidase subunit 2 (MT-CO2) from Lycaon pictus (African wild dog).